A 372-amino-acid polypeptide reads, in one-letter code: Glutamate 5-kinase (372 aa).

ATP is bound at residue lysine 14. Substrate-binding residues include serine 54, aspartate 141, and asparagine 153. Residues 173 to 174 (TD) and 215 to 221 (SGGMLTK) each bind ATP. Residues 280–358 (AGKVVVDEGA…HEIEHILGYI (79 aa)) enclose the PUA domain.

It belongs to the glutamate 5-kinase family.

It localises to the cytoplasm. The enzyme catalyses L-glutamate + ATP = L-glutamyl 5-phosphate + ADP. It participates in amino-acid biosynthesis; L-proline biosynthesis; L-glutamate 5-semialdehyde from L-glutamate: step 1/2. Functionally, catalyzes the transfer of a phosphate group to glutamate to form L-glutamate 5-phosphate. In Methylobacillus flagellatus (strain ATCC 51484 / DSM 6875 / VKM B-1610 / KT), this protein is Glutamate 5-kinase.